The chain runs to 148 residues: UPF0178 protein lpl0088 (148 aa).

It belongs to the UPF0178 family.

The sequence is that of UPF0178 protein lpl0088 from Legionella pneumophila (strain Lens).